We begin with the raw amino-acid sequence, 308 residues long: Phenylcoumaran benzylic ether reductase PT1 (308 aa).

Residues glycine 11–glycine 17, arginine 36, and lysine 46 each bind NADP(+). Lysine 134 acts as the Proton acceptor in catalysis. An NADP(+)-binding site is contributed by arginine 138.

Belongs to the NmrA-type oxidoreductase family. Isoflavone reductase subfamily.

It carries out the reaction (-)-dehydrodiconiferyl alcohol + NADPH + H(+) = (S)-isodihydrodehydrodiconiferyl alcohol + NADP(+). The enzyme catalyses (+)-dehydrodiconiferyl alcohol + NADPH + H(+) = (R)-isodihydrodehydrodiconiferyl alcohol + NADP(+). The catalysed reaction is (2R,3S)-dihydrodehydrodiconiferyl alcohol + NADPH + H(+) = (S)-tetrahydrodehydrodiconiferyl alcohol + NADP(+). It catalyses the reaction (2S,3R)-dihydrodehydrodiconiferyl alcohol + NADPH + H(+) = (R)-tetrahydrodehydrodiconiferyl alcohol + NADP(+). Oxidoreductase involved in lignan biosynthesis. Catalyzes the NADPH-dependent reduction of phenylcoumaran benzylic ethers. Converts dehydrodiconiferyl alcohol (DDC) to isodihydrodehydrodiconiferyl alcohol (IDDDC), and dihydrodehydrodiconiferyl alcohol (DDDC) to tetrahydrodehydrodiconiferyl alcohol (TDDC). The polypeptide is Phenylcoumaran benzylic ether reductase PT1 (Pinus taeda (Loblolly pine)).